The following is a 234-amino-acid chain: Small ribosomal subunit protein eS1y (234 aa).

Residues 1–18 (MAVGKNKRISKGKKGGKK) are compositionally biased toward basic residues. Residues 1–20 (MAVGKNKRISKGKKGGKKKA) are disordered.

It belongs to the eukaryotic ribosomal protein eS1 family. As to quaternary structure, component of the small ribosomal subunit. Mature ribosomes consist of a small (40S) and a large (60S) subunit. The 40S subunit contains about 33 different proteins and 1 molecule of RNA (18S). The 60S subunit contains about 49 different proteins and 3 molecules of RNA (25S, 5.8S and 5S).

It localises to the cytoplasm. This chain is Small ribosomal subunit protein eS1y, found in Vitis vinifera (Grape).